Reading from the N-terminus, the 141-residue chain is Transcription antitermination protein NusB (141 aa).

This sequence belongs to the NusB family.

Its function is as follows. Involved in transcription antitermination. Required for transcription of ribosomal RNA (rRNA) genes. Binds specifically to the boxA antiterminator sequence of the ribosomal RNA (rrn) operons. The protein is Transcription antitermination protein NusB of Neisseria gonorrhoeae (strain ATCC 700825 / FA 1090).